We begin with the raw amino-acid sequence, 870 residues long: Phycobiliprotein ApcE (870 aa).

(2R,3E)-phycocyanobilin is bound at residue Cys184. PBS-linker domains follow at residues 241-421 (DLQG…FRTI), 482-665 (GAGI…KIEK), and 679-856 (SSLN…KQNR).

The protein belongs to the phycobilisome linker protein family. Post-translationally, contains one covalently linked bilin chromophore. This protein autochromophorylates (Potential).

It localises to the plastid. Its subcellular location is the chloroplast thylakoid membrane. In terms of biological role, this protein is postulated to act both as terminal energy acceptor and as a linker polypeptide that stabilizes the phycobilisome architecture. May have intrinsic bilin lyase activity. The polypeptide is Phycobiliprotein ApcE (apcE) (Cyanidium caldarium (Red alga)).